The primary structure comprises 226 residues: Ribose-5-phosphate isomerase A (226 aa).

Substrate contacts are provided by residues 33–36, 86–89, and 99–102; these read TGST, DGAD, and KGGG. E108 (proton acceptor) is an active-site residue. Position 126 (K126) interacts with substrate.

This sequence belongs to the ribose 5-phosphate isomerase family. As to quaternary structure, homodimer.

The catalysed reaction is aldehydo-D-ribose 5-phosphate = D-ribulose 5-phosphate. It functions in the pathway carbohydrate degradation; pentose phosphate pathway; D-ribose 5-phosphate from D-ribulose 5-phosphate (non-oxidative stage): step 1/1. Catalyzes the reversible conversion of ribose-5-phosphate to ribulose 5-phosphate. The protein is Ribose-5-phosphate isomerase A of Bordetella bronchiseptica (strain ATCC BAA-588 / NCTC 13252 / RB50) (Alcaligenes bronchisepticus).